The chain runs to 192 residues: Probable chorismate pyruvate-lyase (192 aa).

Substrate contacts are provided by arginine 85, leucine 120, and glutamate 176.

This sequence belongs to the UbiC family.

Its subcellular location is the cytoplasm. It catalyses the reaction chorismate = 4-hydroxybenzoate + pyruvate. The protein operates within cofactor biosynthesis; ubiquinone biosynthesis. Its function is as follows. Removes the pyruvyl group from chorismate, with concomitant aromatization of the ring, to provide 4-hydroxybenzoate (4HB) for the ubiquinone pathway. This is Probable chorismate pyruvate-lyase from Pseudoalteromonas atlantica (strain T6c / ATCC BAA-1087).